A 274-amino-acid chain; its full sequence is Acetylaranotin bis-thiomethyltransferase (274 aa).

It belongs to the class I-like SAM-binding methyltransferase superfamily.

Its pathway is mycotoxin biosynthesis. Acetylaranotin bis-thiomethyltransferase involved in the biosynthesis of acetylaranotin derivatives, members of the epipolythiodioxopiperazine (ETP) class of toxins characterized by a disulfide-bridged cyclic dipeptide. The first step of acetylaranotin biosynthesis is performed by the NRPS ataP which produces diketopiperazine cyclo-L-Phe-L-Phe via the condensation of 2 phenylalanines (L-Phe). The ataC domain of ataTC then catalyzes the formation of bishydroxylation of cyclo-L-Phe-L-Phe. The glutathione S-transferase domain ataG in ataIMG further catalyzes the conjugation of two glutathiones to the bishydroxylated intermediate. Next, the dipeptidase ataJ removes the Glu residues. The following step is performed by the carbon sulfur lyase domain ataI of ataIMG which may convert the bis-cysteinyl adduct to yield an epidithiol intermediate. The ataT domain from ataTC then catalyzes the oxidation of the free dithiols, followed by a cyclization step catalyzed by the cytochrome P450 ataF. AtaF probably acts as an epoxidase to promote a dual epoxidation formation at C8 and C9 along with C8' and C9', followed by the spontaneous nucleophilic attack of the amide nitrogens N10 and N10' to yield an intermediate with the pyrrolidine partial structure. The final steps of acetylaranotin biosynthesis involve the acetylation and ring rearrangement of an epitetrathiodiketopiperazine intermediate to produce acetylaranotin. AtaH probably catalyzes the acetylation of epitetrathiodiketopiperazine to produce a diacetate and ataY is responsible for the formation of the dihydrooxepin moiety that converts the diacetate intermediate to acetylaranotin via acetylapoaranotin. Both enzymes could function independently in the absence of the other. The acetylaranotin bis-thiomethyltransferase ataS located outside of acetylaranotin gene cluster is the main thiomethyltransferase responsible for converting acetylaranotin and its related intermediates to their methylated forms. The protein is Acetylaranotin bis-thiomethyltransferase of Aspergillus terreus (strain NIH 2624 / FGSC A1156).